Consider the following 491-residue polypeptide: UDP-N-acetylmuramate--L-alanine ligase (491 aa).

126-132 (GTHGKTT) contributes to the ATP binding site.

The protein belongs to the MurCDEF family.

It localises to the cytoplasm. It carries out the reaction UDP-N-acetyl-alpha-D-muramate + L-alanine + ATP = UDP-N-acetyl-alpha-D-muramoyl-L-alanine + ADP + phosphate + H(+). It functions in the pathway cell wall biogenesis; peptidoglycan biosynthesis. In terms of biological role, cell wall formation. This Salmonella paratyphi A (strain ATCC 9150 / SARB42) protein is UDP-N-acetylmuramate--L-alanine ligase.